We begin with the raw amino-acid sequence, 430 residues long: Carbamoyl phosphate synthase arginine-specific small chain (430 aa).

The N-terminal 9 residues, 1-9 (MLSATKRYL), are a transit peptide targeting the mitochondrion. The region spanning 219-407 (HIAVLDCGAK…FDNINVYKKS (189 aa)) is the Glutamine amidotransferase type-1 domain. C296 (nucleophile) is an active-site residue. Active-site residues include H380 and E382.

It belongs to the CarA family. Heterodimer composed of 2 chains; the small (or glutamine) chain promotes the hydrolysis of glutamine to ammonia, which is used by the large (or ammonia) chain to synthesize carbamoyl phosphate.

The protein resides in the mitochondrion matrix. The enzyme catalyses hydrogencarbonate + L-glutamine + 2 ATP + H2O = carbamoyl phosphate + L-glutamate + 2 ADP + phosphate + 2 H(+). The catalysed reaction is L-glutamine + H2O = L-glutamate + NH4(+). It functions in the pathway amino-acid biosynthesis; L-arginine biosynthesis; carbamoyl phosphate from bicarbonate: step 1/1. In terms of biological role, small subunit of the arginine-specific carbamoyl phosphate synthase (CPSase). CPSase catalyzes the formation of carbamoyl phosphate from the ammonia moiety of glutamine, carbonate, and phosphate donated by ATP, the first step of the arginine biosynthetic pathway. The small subunit (glutamine amidotransferase) binds and cleaves glutamine to supply the large subunit with the substrate ammonia. The protein is Carbamoyl phosphate synthase arginine-specific small chain (CPA1) of Candida albicans (strain SC5314 / ATCC MYA-2876) (Yeast).